We begin with the raw amino-acid sequence, 453 residues long: Allantoinase (453 aa).

6 residues coordinate Zn(2+): histidine 59, histidine 61, lysine 146, histidine 186, histidine 242, and aspartate 315. Lysine 146 carries the post-translational modification N6-carboxylysine.

It belongs to the metallo-dependent hydrolases superfamily. Allantoinase family. In terms of assembly, homotetramer. It depends on Zn(2+) as a cofactor. In terms of processing, carboxylation allows a single lysine to coordinate two zinc ions.

It catalyses the reaction (S)-allantoin + H2O = allantoate + H(+). Its pathway is nitrogen metabolism; (S)-allantoin degradation; allantoate from (S)-allantoin: step 1/1. Functionally, catalyzes the conversion of allantoin (5-ureidohydantoin) to allantoic acid by hydrolytic cleavage of the five-member hydantoin ring. The protein is Allantoinase of Escherichia coli (strain SMS-3-5 / SECEC).